Here is a 335-residue protein sequence, read N- to C-terminus: Glutamyl-tRNA reductase (335 aa).

Residues 60–63 (TCHR), S110, 115–117 (ETE), and Q121 contribute to the substrate site. Residue C61 is the Nucleophile of the active site. 189-194 (GYSEIN) contacts NADP(+).

Belongs to the glutamyl-tRNA reductase family. In terms of assembly, homodimer.

It carries out the reaction (S)-4-amino-5-oxopentanoate + tRNA(Glu) + NADP(+) = L-glutamyl-tRNA(Glu) + NADPH + H(+). It participates in porphyrin-containing compound metabolism; protoporphyrin-IX biosynthesis; 5-aminolevulinate from L-glutamyl-tRNA(Glu): step 1/2. Catalyzes the NADPH-dependent reduction of glutamyl-tRNA(Glu) to glutamate 1-semialdehyde (GSA). In Chlamydia trachomatis serovar A (strain ATCC VR-571B / DSM 19440 / HAR-13), this protein is Glutamyl-tRNA reductase.